The following is a 1050-amino-acid chain: uncharacterized protein (1050 aa).

The Cytoplasmic segment spans residues 1–83 (MARLLTKSSQ…AVKLGTFEGC (83 aa)). A phosphoserine mark is found at S9 and S60. T64 is subject to Phosphothreonine. Residues 84-104 (FIPTTLNVLSILLYLRFPWII) traverse the membrane as a helical segment. Topologically, residues 105–112 (GEAGVLKT) are extracellular. A helical membrane pass occupies residues 113 to 133 (LLMLFISYAVGIFTSLSISAI). The Cytoplasmic segment spans residues 134–146 (CTNGMVRGGGAYY). Residues 147 to 169 (AVSRSIGPELGGSIGLIFYVGQI) form a helical membrane-spanning segment. Topologically, residues 170-202 (LNTGMNISGFVEPIISIFGKESGTISQFLPEGY) are extracellular. Residue N175 is glycosylated (N-linked (GlcNAc...) asparagine). A helical membrane pass occupies residues 203–223 (WWVFLYTTCVLAMCCILCCLG). Topologically, residues 224-232 (SAIFAKASN) are cytoplasmic. Residues 233 to 253 (ALFVVIILSTISIPISSIFVH) form a helical membrane-spanning segment. The Extracellular segment spans residues 254-295 (PFKDPSLLVHFTGLKWSTLMKNLASAYTENEKGTGYESFKST). At S270 the chain carries Phosphoserine. T271 bears the Phosphothreonine mark. A helical transmembrane segment spans residues 296–316 (FGVFFPATAGLLAGASMSGDL). Topologically, residues 317–334 (KAPSRSIPKGTISSQATT) are cytoplasmic. The chain crosses the membrane as a helical span at residues 335–355 (FLLYLLVILCVGASVTRTGLL). The Extracellular portion of the chain corresponds to 356-368 (LDMDVMEHISLHP). A helical membrane pass occupies residues 369–389 (LFIISGILSSGAFSSFMGIFG). At 390–417 (AAKLLQAIARDDLIPGMFFFAKGSSYDD) the chain is on the cytoplasmic side. A helical membrane pass occupies residues 418-438 (IPYVAIGVTYLITQISLFWDI). Over 439-442 (NMLS) the chain is Extracellular. A helical transmembrane segment spans residues 443–463 (SMITMTFLLTFGFINLSCFLL). The Cytoplasmic segment spans residues 464-480 (RISSTPNFRPTFRYFNR). A helical transmembrane segment spans residues 481 to 497 (RTTLVGTILSFGVMFYV). Over 498–499 (DR) the chain is Extracellular. Residues 500–520 (LNAFISFLIAGILVVVIYFTC) traverse the membrane as a helical segment. At 521 to 1050 (PPKNWGDVSQ…SKSLTITTAL (530 aa)) the chain is on the cytoplasmic side. S901 carries the post-translational modification Phosphoserine. Positions 915–943 (ETESSFGNRSLSPKQENRRTYSDSTIESS) are disordered. Positions 916–928 (TESSFGNRSLSPK) are enriched in polar residues. S936 is subject to Phosphoserine. T939 carries the post-translational modification Phosphothreonine.

This sequence belongs to the SLC12A transporter family.

It localises to the membrane. This is an uncharacterized protein from Schizosaccharomyces pombe (strain 972 / ATCC 24843) (Fission yeast).